Here is a 114-residue protein sequence, read N- to C-terminus: Nucleoid-associated protein PCC7424_2224 (114 aa).

The protein belongs to the YbaB/EbfC family. In terms of assembly, homodimer.

It is found in the cytoplasm. The protein resides in the nucleoid. Its function is as follows. Binds to DNA and alters its conformation. May be involved in regulation of gene expression, nucleoid organization and DNA protection. This Gloeothece citriformis (strain PCC 7424) (Cyanothece sp. (strain PCC 7424)) protein is Nucleoid-associated protein PCC7424_2224.